A 131-amino-acid chain; its full sequence is Small ribosomal subunit protein uS8 (131 aa).

The protein belongs to the universal ribosomal protein uS8 family. In terms of assembly, part of the 30S ribosomal subunit. Contacts proteins S5 and S12.

In terms of biological role, one of the primary rRNA binding proteins, it binds directly to 16S rRNA central domain where it helps coordinate assembly of the platform of the 30S subunit. This chain is Small ribosomal subunit protein uS8, found in Hamiltonella defensa subsp. Acyrthosiphon pisum (strain 5AT).